Consider the following 431-residue polypeptide: Transcription factor Sp7 (431 aa).

Residues 30–56 (SSPLRDSTTLGKAGTKKPYSVGSDLSA) are disordered. N6-propionyllysine occurs at positions 41 and 45. Residue lysine 58 forms a Glycyl lysine isopeptide (Lys-Gly) (interchain with G-Cter in ubiquitin) linkage. Disordered regions lie at residues 71 to 115 (TNGL…VPKG) and 154 to 260 (TPTP…SGGY). The 9aaTAD motif lies at 156 to 164 (TPWWDMHPG). A compositionally biased stretch (gly residues) spans 166–178 (NWLGGGQGQGDGL). A Glycyl lysine isopeptide (Lys-Gly) (interchain with G-Cter in ubiquitin) cross-link involves residue lysine 230. 3 C2H2-type zinc fingers span residues 294-318 (HSCH…LRWH), 324-348 (FVCN…VRTH), and 354-376 (FTCL…QRTH). An N6-propionyllysine mark is found at lysine 361 and lysine 371. A disordered region spans residues 367–431 (DHLSKHQRTH…SPEQSNLLEI (65 aa)). The segment covering 403-412 (SQTPRPSASP) has biased composition (polar residues).

It belongs to the Sp1 C2H2-type zinc-finger protein family. Interacts with RIOX1; the interaction is direct and inhibits transcription activator activity. Ubiquitination at leads to proteasomal degradation. SP7 is a short-live protein with an endogenous half-life of approximately 12 hours. Post-translationally, propionylated. Depropionylation at Lys-371 by SIRT7 activates transcription factor activity and positively regulates bone formation by osteoblasts. As to expression, restricted to bone-derived cell.

The protein localises to the nucleus. Functionally, transcriptional activator essential for osteoblast differentiation. Binds to SP1 and EKLF consensus sequences and to other G/C-rich sequences. The sequence is that of Transcription factor Sp7 (SP7) from Homo sapiens (Human).